A 423-amino-acid polypeptide reads, in one-letter code: Phospholipase A1-IIalpha (423 aa).

Residues Ser-194–Ile-217 adopt a coiled-coil conformation. The active-site Acyl-ester intermediate is Ser-223. Catalysis depends on charge relay system residues Ser-223, Asp-290, and His-327. Positions His-399–Asp-423 are disordered. Acidic residues predominate over residues Asp-401–Asp-410. Positions Ser-411 to Asp-423 are enriched in polar residues.

The protein belongs to the AB hydrolase superfamily. Lipase family.

Its subcellular location is the cytoplasm. Its function is as follows. Acylhydrolase that catalyzes the hydrolysis of phospholipids at the sn-1 position. The sequence is that of Phospholipase A1-IIalpha from Arabidopsis thaliana (Mouse-ear cress).